We begin with the raw amino-acid sequence, 368 residues long: tRNA-specific 2-thiouridylase MnmA (368 aa).

ATP is bound by residues 11–18 (GMSGGVDS) and Met-37. The interval 97-99 (NPD) is interaction with target base in tRNA. Cys-102 (nucleophile) is an active-site residue. Cys-102 and Cys-199 are disulfide-bonded. Gly-127 lines the ATP pocket. Positions 149–151 (KDQ) are interaction with tRNA. Residue Cys-199 is the Cysteine persulfide intermediate of the active site. Positions 311 to 312 (RY) are interaction with tRNA.

This sequence belongs to the MnmA/TRMU family. In terms of assembly, interacts with TusE.

Its subcellular location is the cytoplasm. The enzyme catalyses S-sulfanyl-L-cysteinyl-[protein] + uridine(34) in tRNA + AH2 + ATP = 2-thiouridine(34) in tRNA + L-cysteinyl-[protein] + A + AMP + diphosphate + H(+). Functionally, catalyzes the 2-thiolation of uridine at the wobble position (U34) of tRNA(Lys), tRNA(Glu) and tRNA(Gln), leading to the formation of s(2)U34, the first step of tRNA-mnm(5)s(2)U34 synthesis. Sulfur is provided by IscS, via a sulfur-relay system. Binds ATP and its substrate tRNAs. This is tRNA-specific 2-thiouridylase MnmA from Salmonella typhimurium (strain LT2 / SGSC1412 / ATCC 700720).